We begin with the raw amino-acid sequence, 339 residues long: DNA-directed RNA polymerase subunit alpha (339 aa).

The segment at Met-1–Glu-235 is alpha N-terminal domain (alpha-NTD). Residues Phe-251 to Tyr-339 are alpha C-terminal domain (alpha-CTD).

This sequence belongs to the RNA polymerase alpha chain family. In terms of assembly, homodimer. The RNAP catalytic core consists of 2 alpha, 1 beta, 1 beta' and 1 omega subunit. When a sigma factor is associated with the core the holoenzyme is formed, which can initiate transcription.

It carries out the reaction RNA(n) + a ribonucleoside 5'-triphosphate = RNA(n+1) + diphosphate. In terms of biological role, DNA-dependent RNA polymerase catalyzes the transcription of DNA into RNA using the four ribonucleoside triphosphates as substrates. This is DNA-directed RNA polymerase subunit alpha from Rhodopseudomonas palustris (strain ATCC BAA-98 / CGA009).